A 377-amino-acid polypeptide reads, in one-letter code: 4-hydroxy-tetrahydrodipicolinate synthase 2, chloroplastic (377 aa).

The transit peptide at 1–51 (MMAAQPTANPGVRLGWKAPGALASPPRLALSRSAAAPLASHRVGRGKFSAA) directs the protein to the chloroplast. T120 is a binding site for pyruvate. Y206 functions as the Proton donor/acceptor in the catalytic mechanism. K234 (schiff-base intermediate with substrate) is an active-site residue. A pyruvate-binding site is contributed by I273.

Belongs to the DapA family. In terms of assembly, tetramer of modified subunits derived from two genes in different combinations.

It localises to the plastid. The protein localises to the chloroplast. It catalyses the reaction L-aspartate 4-semialdehyde + pyruvate = (2S,4S)-4-hydroxy-2,3,4,5-tetrahydrodipicolinate + H2O + H(+). It functions in the pathway amino-acid biosynthesis; L-lysine biosynthesis via DAP pathway; (S)-tetrahydrodipicolinate from L-aspartate: step 3/4. Its activity is regulated as follows. Sensitive to lysine inhibition. This inhibition increase in an allosteric manner with increasing concentration of the inhibitor. Its function is as follows. Catalyzes the condensation of (S)-aspartate-beta-semialdehyde [(S)-ASA] and pyruvate to 4-hydroxy-tetrahydrodipicolinate (HTPA). The sequence is that of 4-hydroxy-tetrahydrodipicolinate synthase 2, chloroplastic from Triticum aestivum (Wheat).